The primary structure comprises 379 residues: Tryptophan 2,3-dioxygenase (379 aa).

Residues 57–61 and arginine 128 contribute to the substrate site; that span reads FIITH. Histidine 312 is a binding site for heme. Threonine 327 lines the substrate pocket.

It belongs to the tryptophan 2,3-dioxygenase family. As to quaternary structure, homotetramer. Dimer of dimers. Requires heme as cofactor.

The catalysed reaction is L-tryptophan + O2 = N-formyl-L-kynurenine. It functions in the pathway amino-acid degradation; L-tryptophan degradation via kynurenine pathway; L-kynurenine from L-tryptophan: step 1/2. It participates in pigment biosynthesis; ommochrome biosynthesis. Functionally, heme-dependent dioxygenase that catalyzes the oxidative cleavage of the L-tryptophan (L-Trp) pyrrole ring and converts L-tryptophan to N-formyl-L-kynurenine. Catalyzes the oxidative cleavage of the indole moiety. This chain is Tryptophan 2,3-dioxygenase, found in Drosophila sechellia (Fruit fly).